Reading from the N-terminus, the 1373-residue chain is Disease resistance protein RRS1 (1373 aa).

The TIR domain occupies 5 to 146 (EKDEEFVCIS…EIVRDVYETH (142 aa)). The region spanning 170–421 (IGIRCVGIWG…LLEGCGFFPH (252 aa)) is the NB-ARC domain. An ATP-binding site is contributed by 179-186 (GMPGIGKT). 9 LRR repeats span residues 498 to 522 (SEEI…AFKN), 535 to 553 (NPEV…HSLP), 554 to 575 (NELR…NFDP), 577 to 598 (HLVE…TKNL), 621 to 646 (AENL…RLLR), 665 to 688 (PPNI…TVKP), 742 to 766 (LPNM…SIQG), 768 to 793 (PRFL…SLEI), and 831 to 854 (PRNL…PLSL). The Nuclear localization signal signature appears at 988 to 1005 (RNFHCWAPGKVVPKVRKD). Positions 1204–1272 (IPAIDEGDLW…YLSEHNHPRP (69 aa)) form a DNA-binding region, WRKY. A disordered region spans residues 1300–1323 (RVFQNKDEPNKPHLPSSSTPPGNA).

In terms of assembly, interacts with PopP2, a R.solanacearum type III effector.

The protein localises to the nucleus. In terms of biological role, transcription factor. Interacts specifically with the W box (5'-(T)TGAC[CT]-3'), a frequently occurring elicitor-responsive cis-acting element. Also acts as a disease resistance protein involved in resistance to fungal and bacterial pathogens, including R.solanacearum, P.syringae pv. tomato and C.higginsianum. This is Disease resistance protein RRS1 from Arabidopsis thaliana (Mouse-ear cress).